The sequence spans 423 residues: F-box/LRR-repeat protein 2 (423 aa).

Positions G9–I55 constitute an F-box domain. LRR repeat units follow at residues Q61–G87, C88–G113, C114–S139, C140–W165, C166–G191, C192–S217, C218–G243, C244–R269, C270–E295, C296–H321, C322–N350, C351–D375, and C376–A401. Positions L80 to G90 are interaction with Calmodulin. Residue K201 forms a Glycyl lysine isopeptide (Lys-Gly) (interchain with G-Cter in ubiquitin) linkage. T404 bears the Phosphothreonine mark. C420 carries S-geranylgeranyl cysteine lipidation. Positions C420–L423 match the CAAX motif motif.

As to quaternary structure, part of the SCF (SKP1-CUL1-F-box) E3 ubiquitin-protein ligase complex SCF(FBXL2) composed of CUL1, SKP1, RBX1 and FBXL2. Interacts with calmodulin; may antagonize substrate ubiquitination by SCF(FBXL2). May interact with PIK3R1. Interacts with PTPN13. Phosphorylated by GSK-beta (GSK3B), promoting recognition by FBXO3, leading to its ubiquitination by the SCF(FBXO3) complex. In terms of processing, ubiquitinated at Lys-201 by the SCF(FBXO3) complex in response to lipopolysaccharide (LPS), leading to its degradation by the proteasome.

The protein resides in the membrane. Its pathway is protein modification; protein ubiquitination. Its function is as follows. Calcium-activated substrate recognition component of the SCF (SKP1-cullin-F-box protein) E3 ubiquitin-protein ligase complex, SCF(FBXL2), which mediates the ubiquitination and subsequent proteasomal degradation of target proteins. Unlike many F-box proteins, FBXL2 does not seem to target phosphodegron within its substrates but rather calmodulin-binding motifs and is thereby antagonized by calmodulin. This is the case for the cyclins CCND2 and CCND3 which polyubiquitination and subsequent degradation are inhibited by calmodulin. Through CCND2 and CCND3 degradation induces cell-cycle arrest in G(0). SCF(FBXL2) also mediates PIK3R2 ubiquitination and proteasomal degradation thereby regulating phosphatidylinositol 3-kinase signaling and autophagy. PCYT1A monoubiquitination by SCF(FBXL2) and subsequent degradation regulates synthesis of phosphatidylcholine, which is utilized for formation of membranes and of pulmonary surfactant. The SCF(FBXL2) complex acts as a regulator of inflammation by mediating ubiquitination and degradation of TRAF proteins (TRAF1, TRAF2, TRAF3, TRAF4, TRAF5 and TRAF6). The SCF(FBXL2) complex acts as a negative regulator of the NLRP3 inflammasome by mediating ubiquitination and degradation of NLRP3. In Bos taurus (Bovine), this protein is F-box/LRR-repeat protein 2.